Reading from the N-terminus, the 550-residue chain is DNA-directed RNA polymerase subunit alpha (550 aa).

The interval 1–333 (MTIYPNLKKI…QENNLFRSEK (333 aa)) is alpha N-terminal domain (alpha-NTD). The interval 185–258 (TTLKKRNILL…TSLGHDTVSN (74 aa)) is insert. The interval 378–550 (FLNQSLGQNK…SLTFEYARKF (173 aa)) is alpha C-terminal domain (alpha-CTD).

The protein belongs to the RNA polymerase alpha chain family. In plastids the minimal PEP RNA polymerase catalytic core is composed of four subunits: alpha, beta, beta', and beta''. When a (nuclear-encoded) sigma factor is associated with the core the holoenzyme is formed, which can initiate transcription.

The protein localises to the plastid. The protein resides in the chloroplast. It catalyses the reaction RNA(n) + a ribonucleoside 5'-triphosphate = RNA(n+1) + diphosphate. DNA-dependent RNA polymerase catalyzes the transcription of DNA into RNA using the four ribonucleoside triphosphates as substrates. The protein is DNA-directed RNA polymerase subunit alpha (rpoA) of Chlamydomonas reinhardtii (Chlamydomonas smithii).